A 292-amino-acid chain; its full sequence is Glutamyl-Q tRNA(Asp) synthetase (292 aa).

L-glutamate contacts are provided by residues 11 to 15 (RFAPS) and glutamate 47. Positions 14-24 (PSPTGPLHFGS) match the 'HIGH' region motif. Residues cysteine 103, cysteine 105, tyrosine 116, and cysteine 120 each coordinate Zn(2+). L-glutamate is bound by residues tyrosine 173 and arginine 191. A 'KMSKS' region motif is present at residues 229-233 (KLSKQ). Lysine 232 is an ATP binding site.

This sequence belongs to the class-I aminoacyl-tRNA synthetase family. GluQ subfamily. Requires Zn(2+) as cofactor.

Catalyzes the tRNA-independent activation of glutamate in presence of ATP and the subsequent transfer of glutamate onto a tRNA(Asp). Glutamate is transferred on the 2-amino-5-(4,5-dihydroxy-2-cyclopenten-1-yl) moiety of the queuosine in the wobble position of the QUC anticodon. The chain is Glutamyl-Q tRNA(Asp) synthetase from Acinetobacter baylyi (strain ATCC 33305 / BD413 / ADP1).